We begin with the raw amino-acid sequence, 534 residues long: Probable RNA-binding protein 46 (534 aa).

3 RRM domains span residues 61–139 (CEVF…VSLD), 141–223 (CRLF…WASP), and 236–308 (KVLY…LAKP).

The protein localises to the cytoplasm. Functionally, essential for male and female fertility, playing a crucial role in regulating germ cell development by ensuring the proper progression of meiosis prophase I. This Xenopus tropicalis (Western clawed frog) protein is Probable RNA-binding protein 46 (rbm46).